The chain runs to 519 residues: Histidine--tRNA ligase (519 aa).

It belongs to the class-II aminoacyl-tRNA synthetase family. In terms of assembly, homodimer.

The protein resides in the cytoplasm. It catalyses the reaction tRNA(His) + L-histidine + ATP = L-histidyl-tRNA(His) + AMP + diphosphate + H(+). The protein is Histidine--tRNA ligase of Rhodopseudomonas palustris (strain BisB18).